A 33-amino-acid chain; its full sequence is Cytochrome b6-f complex subunit 8 (33 aa).

A helical membrane pass occupies residues leucine 2–valine 22.

The protein belongs to the PetN family. The 4 large subunits of the cytochrome b6-f complex are cytochrome b6, subunit IV (17 kDa polypeptide, PetD), cytochrome f and the Rieske protein, while the 4 small subunits are PetG, PetL, PetM and PetN. The complex functions as a dimer.

Its subcellular location is the cellular thylakoid membrane. In terms of biological role, component of the cytochrome b6-f complex, which mediates electron transfer between photosystem II (PSII) and photosystem I (PSI), cyclic electron flow around PSI, and state transitions. The sequence is that of Cytochrome b6-f complex subunit 8 from Prochlorococcus marinus (strain MIT 9211).